Consider the following 162-residue polypeptide: Caveolin-2 (162 aa).

Residues 1–86 (MGLETEKADV…FEISKYVMYK (86 aa)) are Cytoplasmic-facing. Residue Tyr19 is modified to Phosphotyrosine; by SRC. A phosphoserine mark is found at Ser20 and Ser23. Residue Tyr27 is modified to Phosphotyrosine; by SRC. Ser36 carries the phosphoserine modification. Residues 87 to 107 (FLTVFLAIPLAFIAGILFATL) constitute an intramembrane region (helical). Residues 108-162 (SCLHIWILMPFVKTCLMVLPSVQTIWKSVTDVFIAPLCTSIGRSFSSVSLQLSQD) are Cytoplasmic-facing.

It belongs to the caveolin family. As to quaternary structure, monomer or homodimer. Interacts with CAV1; the interaction forms a stable heterooligomeric complex that is required for targeting to lipid rafts and for caveolae formation. Tyrosine phosphorylated forms do not form heterooligomers with the Tyr-19-phosphorylated form existing as a monomer or dimer, and the Tyr-27-form as a monomer only. Interacts (tyrosine phosphorylated form) with the SH2 domain-containing proteins, RASA1, NCK1 and SRC. Interacts (tyrosine phosphorylated form) with INSR, the interaction (Tyr-27-phosphorylated form) is increased on insulin stimulation. Interacts (Tyr-19 phosphorylated form) with MAPK1 (phosphorylated form); the interaction, promoted by insulin, leads to nuclear location and MAPK1 activation. Interacts with STAT3; the interaction is increased on insulin-induced tyrosine phosphorylation leading to STAT activation. Phosphorylated on serine and tyrosine residues. CAV1 promotes phosphorylation on Ser-23 which then targets the complex to the plasma membrane, lipid rafts and caveolae. Phosphorylation on Ser-36 appears to modulate mitosis in endothelial cells. Phosphorylation on both Tyr-19 and Tyr-27 is required for insulin-induced 'Ser-727' phosphorylation of STAT3 and its activation. Phosphorylation on Tyr-19 is required for insulin-induced phosphorylation of MAPK1 and DNA binding of STAT3. Tyrosine phosphorylation is induced by both EGF and insulin (By. similarity).

It is found in the nucleus. The protein resides in the cytoplasm. It localises to the golgi apparatus membrane. The protein localises to the cell membrane. Its subcellular location is the membrane. It is found in the caveola. Functionally, may act as a scaffolding protein within caveolar membranes. Interacts directly with G-protein alpha subunits and can functionally regulate their activity. Acts as an accessory protein in conjunction with CAV1 in targeting to lipid rafts and driving caveolae formation. The Ser-36 phosphorylated form has a role in modulating mitosis in endothelial cells. Positive regulator of cellular mitogenesis of the MAPK signaling pathway. Required for the insulin-stimulated nuclear translocation and activation of MAPK1 and STAT3, and the subsequent regulation of cell cycle progression. The polypeptide is Caveolin-2 (CAV2) (Papio anubis (Olive baboon)).